A 232-amino-acid polypeptide reads, in one-letter code: Ornithine carbamoyltransferase (232 aa).

Carbamoyl phosphate contacts are provided by residues Gln-15, Arg-39, and 66–69 (HPTQ). L-ornithine contacts are provided by residues Asn-99, Asp-163, and 167–168 (SM). Carbamoyl phosphate contacts are provided by residues 204 to 207 (HCLP) and Thr-232.

It belongs to the aspartate/ornithine carbamoyltransferase superfamily. OTCase family.

It is found in the cytoplasm. The enzyme catalyses carbamoyl phosphate + L-ornithine = L-citrulline + phosphate + H(+). It participates in amino-acid biosynthesis; L-arginine biosynthesis; L-arginine from L-ornithine and carbamoyl phosphate: step 1/3. Functionally, reversibly catalyzes the transfer of the carbamoyl group from carbamoyl phosphate (CP) to the N(epsilon) atom of ornithine (ORN) to produce L-citrulline. The polypeptide is Ornithine carbamoyltransferase (argF) (Neisseria pharyngis).